A 401-amino-acid polypeptide reads, in one-letter code: Elongation factor Tu, apicoplast (401 aa).

In terms of domain architecture, tr-type G spans 10–206 (KPHINIGTIG…ALDSYIPLPK (197 aa)). Residues 19 to 26 (GHVDHGKT) form a G1 region. 19–26 (GHVDHGKT) provides a ligand contact to GTP. Residue Thr-26 participates in Mg(2+) binding. Positions 60-64 (GITIK) are G2. Residues 81–84 (DCPG) are G3. Residues 81-85 (DCPGH) and 136-139 (NKID) each bind GTP. The segment at 136–139 (NKID) is G4. Positions 173-175 (SAL) are G5.

Belongs to the TRAFAC class translation factor GTPase superfamily. Classic translation factor GTPase family. EF-Tu/EF-1A subfamily. Monomer.

It is found in the plastid. Its subcellular location is the apicoplast. It carries out the reaction GTP + H2O = GDP + phosphate + H(+). In terms of biological role, GTP hydrolase that promotes the GTP-dependent binding of aminoacyl-tRNA to the A-site of ribosomes during protein biosynthesis. The polypeptide is Elongation factor Tu, apicoplast (tufA) (Toxoplasma gondii).